We begin with the raw amino-acid sequence, 427 residues long: Glutamate-1-semialdehyde 2,1-aminomutase (427 aa).

At Lys265 the chain carries N6-(pyridoxal phosphate)lysine.

This sequence belongs to the class-III pyridoxal-phosphate-dependent aminotransferase family. HemL subfamily. Homodimer. Pyridoxal 5'-phosphate serves as cofactor.

The protein localises to the cytoplasm. The enzyme catalyses (S)-4-amino-5-oxopentanoate = 5-aminolevulinate. It participates in porphyrin-containing compound metabolism; protoporphyrin-IX biosynthesis; 5-aminolevulinate from L-glutamyl-tRNA(Glu): step 2/2. This is Glutamate-1-semialdehyde 2,1-aminomutase from Actinobacillus succinogenes (strain ATCC 55618 / DSM 22257 / CCUG 43843 / 130Z).